A 443-amino-acid polypeptide reads, in one-letter code: MNRKYFGTDGIRGTVGEAPITPDFVLRLAHAVGRVLRRTEARPTVLIGKDTRISGYMLESALESGFNSAGVDVVLLGPLPTPGVAYLTRAQRASLGVVISASHNPFADNGIKFFSAQGNKLNDEWEFEVEATLKEEPVWADSASLGKTRRLDDAAGRYIEFCKSTFAHDLTLKGLKIVVDGAHGAAYQIAPMVFHELGAEVIAIGCAPDGLNINDGVGATHPQALVNAVLANKADYGIALDGDADRLQMVDAQGRLFNGDEVLYLMVNERLSRGEKVPGTVGTLMTNMAVEVALKAKGVEFVRAKVGDRYILEELERRGWLLGGEGSGHMLALDKHTTGDGLISALQVLQACARSNQTLAQLLSEVVLFPQTLINVRLKPGQDWKNSAELAAQTKAAEIELGDSGRILIRASGTEPLLRVMVEARDAEQARACAERVADAVRS.

Ser102 acts as the Phosphoserine intermediate in catalysis. 4 residues coordinate Mg(2+): Ser102, Asp241, Asp243, and Asp245. Ser102 is subject to Phosphoserine.

The protein belongs to the phosphohexose mutase family. It depends on Mg(2+) as a cofactor. Activated by phosphorylation.

It carries out the reaction alpha-D-glucosamine 1-phosphate = D-glucosamine 6-phosphate. Its function is as follows. Catalyzes the conversion of glucosamine-6-phosphate to glucosamine-1-phosphate. The chain is Phosphoglucosamine mutase from Polaromonas naphthalenivorans (strain CJ2).